The primary structure comprises 429 residues: Serine--tRNA ligase (429 aa).

Position 228–230 (228–230) interacts with L-serine; sequence TSE. 259-261 is a binding site for ATP; it reads RAE. Glu282 provides a ligand contact to L-serine. ATP is bound at residue 346 to 349; sequence EISS. Ser384 is a binding site for L-serine.

This sequence belongs to the class-II aminoacyl-tRNA synthetase family. Type-1 seryl-tRNA synthetase subfamily. Homodimer. The tRNA molecule binds across the dimer.

Its subcellular location is the cytoplasm. The enzyme catalyses tRNA(Ser) + L-serine + ATP = L-seryl-tRNA(Ser) + AMP + diphosphate + H(+). The catalysed reaction is tRNA(Sec) + L-serine + ATP = L-seryl-tRNA(Sec) + AMP + diphosphate + H(+). It participates in aminoacyl-tRNA biosynthesis; selenocysteinyl-tRNA(Sec) biosynthesis; L-seryl-tRNA(Sec) from L-serine and tRNA(Sec): step 1/1. Catalyzes the attachment of serine to tRNA(Ser). Is also able to aminoacylate tRNA(Sec) with serine, to form the misacylated tRNA L-seryl-tRNA(Sec), which will be further converted into selenocysteinyl-tRNA(Sec). In Anaplasma marginale (strain St. Maries), this protein is Serine--tRNA ligase.